The following is a 480-amino-acid chain: Gasdermin-C4 (480 aa).

Residues 1 to 226 are triggers pyroptosis; that stretch reads MGYSFDRASK…TCVILPSATK (226 aa).

The protein belongs to the gasdermin family. Homooligomer; homooligomeric ring-shaped pore complex containing 27-28 subunits when inserted in the membrane. In terms of processing, cleavage by CASP8 relieves autoinhibition by releasing the N-terminal moiety (Gasdermin-C4, N-terminal) that initiates pyroptosis. Palmitoylated.

Its subcellular location is the cytoplasm. The protein localises to the cytosol. The protein resides in the cell membrane. Its activity is regulated as follows. The full-length protein before cleavage is inactive: intramolecular interactions between N- and C-terminal domains mediate autoinhibition in the absence of activation signal. The intrinsic pyroptosis-inducing activity is carried by the released N-terminal moiety (Gasdermin-C4, N-terminal) following cleavage by caspase CASP8. Its function is as follows. This form constitutes the precursor of the pore-forming protein: upon cleavage, the released N-terminal moiety (Gasdermin-C4, N-terminal) binds to membranes and forms pores, triggering pyroptosis. Functionally, pore-forming protein that causes membrane permeabilization and pyroptosis. Produced by the cleavage of gasdermin-C4 by caspase CASP8 in response to death signals. After cleavage, moves to the plasma membrane where it strongly binds to membrane inner leaflet lipids. Homooligomerizes within the membrane and forms pores of 10-15 nanometers (nm) of inner diameter, triggering pyroptosis. This Mus musculus (Mouse) protein is Gasdermin-C4.